The following is a 166-amino-acid chain: Myosin regulatory light chain 2, ventricular/cardiac muscle isoform (166 aa).

Ala-2 carries the post-translational modification N,N,N-trimethylalanine. Asn-14 carries the deamidated asparagine modification. Residue Ser-15 is modified to Phosphoserine; by ZIPK/DAPK3. Residue Ser-19 is modified to Phosphoserine. 3 EF-hand domains span residues 24-59, 94-129, and 130-165; these read TQIQ…LGRV, DPEE…QAER, and FSKE…GEEK. Residues Asp-37, Asn-39, Asp-41, and Asp-48 each contribute to the Ca(2+) site. Phosphothreonine is present on Thr-52.

As to quaternary structure, myosin is a hexamer of 2 heavy chains and 4 light chains. Interacts with MYOC. Post-translationally, N-terminus is methylated by METTL11A/NTM1. In terms of processing, phosphorylated by MYLK3 and MYLK2; promotes cardiac muscle contraction and function. Dephosphorylated by PPP1CB complexed to PPP1R12B. The phosphorylated form in adult is expressed as gradients across the heart from endocardium (low phosphorylation) to epicardium (high phosphorylation); regulates cardiac torsion and workload distribution. As to expression, highly expressed in type I muscle fibers.

Its subcellular location is the cytoplasm. The protein resides in the myofibril. The protein localises to the sarcomere. It localises to the a band. In terms of biological role, contractile protein that plays a role in heart development and function. Following phosphorylation, plays a role in cross-bridge cycling kinetics and cardiac muscle contraction by increasing myosin lever arm stiffness and promoting myosin head diffusion; as a consequence of the increase in maximum contraction force and calcium sensitivity of contraction force. These events altogether slow down myosin kinetics and prolong duty cycle resulting in accumulated myosins being cooperatively recruited to actin binding sites to sustain thin filament activation as a means to fine-tune myofilament calcium sensitivity to force. During cardiogenesis plays an early role in cardiac contractility by promoting cardiac myofibril assembly. The sequence is that of Myosin regulatory light chain 2, ventricular/cardiac muscle isoform from Homo sapiens (Human).